Consider the following 418-residue polypeptide: Glutamyl-tRNA reductase (418 aa).

Substrate-binding positions include 51-54 (TCNR), S107, 112-114 (EPQ), and Q118. Catalysis depends on C52, which acts as the Nucleophile. Position 187–192 (187–192 (GAGETA)) interacts with NADP(+).

Belongs to the glutamyl-tRNA reductase family. Homodimer.

The catalysed reaction is (S)-4-amino-5-oxopentanoate + tRNA(Glu) + NADP(+) = L-glutamyl-tRNA(Glu) + NADPH + H(+). Its pathway is porphyrin-containing compound metabolism; protoporphyrin-IX biosynthesis; 5-aminolevulinate from L-glutamyl-tRNA(Glu): step 1/2. Its function is as follows. Catalyzes the NADPH-dependent reduction of glutamyl-tRNA(Glu) to glutamate 1-semialdehyde (GSA). The protein is Glutamyl-tRNA reductase of Dichelobacter nodosus (strain VCS1703A).